The following is a 103-amino-acid chain: Large ribosomal subunit protein bL21 (103 aa).

This sequence belongs to the bacterial ribosomal protein bL21 family. As to quaternary structure, part of the 50S ribosomal subunit. Contacts protein L20.

In terms of biological role, this protein binds to 23S rRNA in the presence of protein L20. This is Large ribosomal subunit protein bL21 from Saccharophagus degradans (strain 2-40 / ATCC 43961 / DSM 17024).